The following is a 427-amino-acid chain: U1 small nuclear ribonucleoprotein 70 kDa (427 aa).

Disordered stretches follow at residues 82 to 102 (EPGD…SQKR) and 215 to 427 (RGRT…EYVR). Positions 93–102 (PEVELPSQKR) are enriched in basic and acidic residues. Positions 138-216 (KTLFVSRLNY…RRVLVDVERG (79 aa)) constitute an RRM domain. Gly residues predominate over residues 227–241 (LGGGLGTSRVGGGEE). Basic and acidic residues-rich tracts occupy residues 257–402 (EPSR…RYDK) and 409–427 (RYER…EYVR). The residue at position 282 (Ser282) is a Phosphoserine.

Component of the spliceosome. Interacts with CYP63, U2AF35A, U2AF35B, SRZ21, RSZ22, SR34, SR45, SR45A and SCL33. Post-translationally, phosphorylated. The association and dissociation with SR45 is not affected by the phosphorylation status. Ubiquitous.

The protein resides in the nucleus speckle. Its subcellular location is the nucleus. The protein localises to the nucleoplasm. In terms of biological role, mediates the splicing of pre-mRNA by binding to the loop I region of U1-snRNA. The protein is U1 small nuclear ribonucleoprotein 70 kDa (RNU1) of Arabidopsis thaliana (Mouse-ear cress).